A 189-amino-acid polypeptide reads, in one-letter code: Elongation factor P (189 aa).

The residue at position 34 (lysine 34) is an N6-(3,6-diaminohexanoyl)-5-hydroxylysine.

Belongs to the elongation factor P family. May be beta-lysylated on the epsilon-amino group of Lys-34 by the combined action of EpmA and EpmB, and then hydroxylated on the C5 position of the same residue by EpmC (if this protein is present). Lysylation is critical for the stimulatory effect of EF-P on peptide-bond formation. The lysylation moiety may extend toward the peptidyltransferase center and stabilize the terminal 3-CCA end of the tRNA. Hydroxylation of the C5 position on Lys-34 may allow additional potential stabilizing hydrogen-bond interactions with the P-tRNA.

The protein resides in the cytoplasm. It functions in the pathway protein biosynthesis; polypeptide chain elongation. Involved in peptide bond synthesis. Alleviates ribosome stalling that occurs when 3 or more consecutive Pro residues or the sequence PPG is present in a protein, possibly by augmenting the peptidyl transferase activity of the ribosome. Modification of Lys-34 is required for alleviation. This Francisella tularensis subsp. tularensis (strain FSC 198) protein is Elongation factor P.